The chain runs to 49 residues: MRVNVTLACTECGDRNYISTKNKRNNPERVEMKKYCSRDNKHTLHRETK.

Residues 21–49 (KNKRNNPERVEMKKYCSRDNKHTLHRETK) form a disordered region. The segment covering 25 to 49 (NNPERVEMKKYCSRDNKHTLHRETK) has biased composition (basic and acidic residues).

The protein belongs to the bacterial ribosomal protein bL33 family.

This is Large ribosomal subunit protein bL33A from Staphylococcus epidermidis (strain ATCC 35984 / DSM 28319 / BCRC 17069 / CCUG 31568 / BM 3577 / RP62A).